The primary structure comprises 262 residues: Adenosylcobinamide-GDP ribazoletransferase (262 aa).

The next 6 membrane-spanning stretches (helical) occupy residues 43 to 63 (YFGL…WLTQ), 66 to 86 (LPAG…TGGF), 120 to 140 (GALA…ELAL), 146 to 166 (AGSA…SIIF), 191 to 211 (LLIL…LAAL), and 242 to 262 (AAQQ…GNIL).

Belongs to the CobS family. Mg(2+) is required as a cofactor.

Its subcellular location is the cell inner membrane. The catalysed reaction is alpha-ribazole + adenosylcob(III)inamide-GDP = adenosylcob(III)alamin + GMP + H(+). It catalyses the reaction alpha-ribazole 5'-phosphate + adenosylcob(III)inamide-GDP = adenosylcob(III)alamin 5'-phosphate + GMP + H(+). It participates in cofactor biosynthesis; adenosylcobalamin biosynthesis; adenosylcobalamin from cob(II)yrinate a,c-diamide: step 7/7. In terms of biological role, joins adenosylcobinamide-GDP and alpha-ribazole to generate adenosylcobalamin (Ado-cobalamin). Also synthesizes adenosylcobalamin 5'-phosphate from adenosylcobinamide-GDP and alpha-ribazole 5'-phosphate. In Shewanella baltica (strain OS185), this protein is Adenosylcobinamide-GDP ribazoletransferase.